The following is a 71-amino-acid chain: Pro-MCH (71 aa).

An N-terminal signal peptide occupies residues 1–20 (AKMNLSSYILILTFSLFSQG).

It belongs to the melanin-concentrating hormone family.

It is found in the secreted. In Pan paniscus (Pygmy chimpanzee), this protein is Pro-MCH (PMCH).